The sequence spans 356 residues: Glutamine synthetase (356 aa).

In terms of domain architecture, GS beta-grasp spans 26–105 (IMAEYVWVDA…VLAECWNAGG (80 aa)). Positions 112-356 (FRHDCVKVMD…TKALLQFSLA (245 aa)) constitute a GS catalytic domain.

This sequence belongs to the glutamine synthetase family. In terms of assembly, homooctamer.

The protein localises to the cytoplasm. The enzyme catalyses L-glutamate + NH4(+) + ATP = L-glutamine + ADP + phosphate + H(+). In Fusarium solani subsp. phaseoli (Nectria haematococca), this protein is Glutamine synthetase (GLN1).